The chain runs to 108 residues: Ig kappa chain V region GOM (108 aa).

The interval 1 to 23 is framework-1; it reads DIVMTQTPLSLSVSPGEPASISC. Cys23 and Cys88 form a disulfide bridge. Positions 24-34 are complementarity-determining-1; sequence RSSQSNLDYLN. The framework-2 stretch occupies residues 35–49; the sequence is WYLQKAGQSPRLLPE. The disordered stretch occupies residues 44-66; that stretch reads PRLLPEQDSQRASGVPDRFSGSG. The tract at residues 50–56 is complementarity-determining-2; that stretch reads QDSQRAS. Positions 57 to 88 are framework-3; the sequence is GVPDRFSGSGSGTDFTLRIGRVEAEDAGIYYC. The interval 89–97 is complementarity-determining-3; that stretch reads MQRSFYPYT. The interval 98–107 is framework-4; that stretch reads FGQGTRLEVR.

This Canis lupus familiaris (Dog) protein is Ig kappa chain V region GOM.